Consider the following 75-residue polypeptide: UPF0352 protein ESA_01049 (75 aa).

It belongs to the UPF0352 family.

This is UPF0352 protein ESA_01049 from Cronobacter sakazakii (strain ATCC BAA-894) (Enterobacter sakazakii).